Here is a 299-residue protein sequence, read N- to C-terminus: Prolyl 4-hydroxylase 2 (299 aa).

Topologically, residues 1-5 (MSMSR) are cytoplasmic. Residues 6–26 (LGLLLFVAILLVLLQSSTCLI) traverse the membrane as a helical; Signal-anchor for type II membrane protein segment. Residues 27–299 (SSPSSIINPS…GNCRRSCKAC (273 aa)) lie on the Lumenal side of the membrane. One can recognise a Fe2OG dioxygenase domain in the interval 121–246 (NGEDLQVLRY…KWSATKWIHV (126 aa)). Fe cation contacts are provided by His-139 and Asp-141. Asn-165 is a glycosylation site (N-linked (GlcNAc...) asparagine). A Fe cation-binding site is contributed by His-227. 2-oxoglutarate is bound at residue Lys-237. N-linked (GlcNAc...) asparagine glycans are attached at residues Asn-258 and Asn-263. Residues 259–299 (CTDVNESCERWAVLGECGKNPEYMVGTPEIPGNCRRSCKAC) form the ShKT domain. Intrachain disulfides connect Cys-259–Cys-299, Cys-266–Cys-292, and Cys-275–Cys-296.

The protein belongs to the P4HA family. Fe(2+) serves as cofactor. The cofactor is L-ascorbate. In terms of tissue distribution, expressed in epidermal root hair cells (trichoblasts).

It localises to the endoplasmic reticulum membrane. It is found in the golgi apparatus membrane. It carries out the reaction L-prolyl-[collagen] + 2-oxoglutarate + O2 = trans-4-hydroxy-L-prolyl-[collagen] + succinate + CO2. Its function is as follows. Catalyzes the post-translational formation of 4-hydroxyproline in -Xaa-Pro-Gly- sequences in proline-rich peptide sequences of plant glycoproteins and other proteins. Hydroxyprolines are important constituent of many plant cell wall glycoproteins such as extensins, hydroxyproline-rich glycoproteins, lectins and arabinogalactan proteins. Possesses high affinity for leucine-rich repeat and proline-rich extensins of root cell walls that are essential for root hair development. Hydroxyprolines define the subsequent O-glycosylation sites by arabinosyltransferases which elongate the O-arabinosides on extensins. Has low affinity for the substrates tested in vitro. In Arabidopsis thaliana (Mouse-ear cress), this protein is Prolyl 4-hydroxylase 2.